The sequence spans 244 residues: Phosphoadenosine 5'-phosphosulfate reductase (244 aa).

Residue C239 is the Nucleophile; cysteine thiosulfonate intermediate of the active site.

Belongs to the PAPS reductase family. CysH subfamily.

It is found in the cytoplasm. The enzyme catalyses [thioredoxin]-disulfide + sulfite + adenosine 3',5'-bisphosphate + 2 H(+) = [thioredoxin]-dithiol + 3'-phosphoadenylyl sulfate. It participates in sulfur metabolism; hydrogen sulfide biosynthesis; sulfite from sulfate: step 3/3. Functionally, catalyzes the formation of sulfite from phosphoadenosine 5'-phosphosulfate (PAPS) using thioredoxin as an electron donor. This is Phosphoadenosine 5'-phosphosulfate reductase from Yersinia enterocolitica serotype O:8 / biotype 1B (strain NCTC 13174 / 8081).